We begin with the raw amino-acid sequence, 34 residues long: U1-poneritoxin-Na2a (34 aa).

Expressed by the venom gland.

It localises to the secreted. Functionally, may have antimicrobial properties, like most ant linear peptides. The sequence is that of U1-poneritoxin-Na2a from Neoponera apicalis (Ant).